The sequence spans 693 residues: Polyribonucleotide nucleotidyltransferase (693 aa).

2 residues coordinate Mg(2+): Asp-489 and Asp-495. One can recognise a KH domain in the interval 556 to 615; the sequence is PQIHIMNVNPAKIKDVVGRGGSVVKGIVEKTGAQIDTSDSGEVKIFAKDKRSLDLAKSMV. The 69-residue stretch at 625 to 693 folds into the S1 motif domain; sequence GQIYKGKIVK…GRVKLSLVAR (69 aa).

The protein belongs to the polyribonucleotide nucleotidyltransferase family. Component of the RNA degradosome, which is a multiprotein complex involved in RNA processing and mRNA degradation. Mg(2+) serves as cofactor.

Its subcellular location is the cytoplasm. It carries out the reaction RNA(n+1) + phosphate = RNA(n) + a ribonucleoside 5'-diphosphate. Involved in mRNA degradation. Catalyzes the phosphorolysis of single-stranded polyribonucleotides processively in the 3'- to 5'-direction. In Francisella philomiragia subsp. philomiragia (strain ATCC 25017 / CCUG 19701 / FSC 153 / O#319-036), this protein is Polyribonucleotide nucleotidyltransferase.